The following is a 353-amino-acid chain: tRNA-specific 2-thiouridylase MnmA 2 (353 aa).

Residue 6-13 participates in ATP binding; sequence LLSGGVDS. The segment at 92–94 is interaction with target base in tRNA; that stretch reads NPD. Cys97 (nucleophile) is an active-site residue. Residues Cys97 and Cys192 are joined by a disulfide bond. Residue Gly120 participates in ATP binding. The interval 142–144 is interaction with tRNA; that stretch reads KDQ. The active-site Cysteine persulfide intermediate is Cys192.

Belongs to the MnmA/TRMU family.

It is found in the cytoplasm. It catalyses the reaction S-sulfanyl-L-cysteinyl-[protein] + uridine(34) in tRNA + AH2 + ATP = 2-thiouridine(34) in tRNA + L-cysteinyl-[protein] + A + AMP + diphosphate + H(+). In terms of biological role, catalyzes the 2-thiolation of uridine at the wobble position (U34) of tRNA, leading to the formation of s(2)U34. The polypeptide is tRNA-specific 2-thiouridylase MnmA 2 (Bacteroides fragilis (strain YCH46)).